The primary structure comprises 167 residues: CKLF-like MARVEL transmembrane domain-containing protein 7 (167 aa).

Residues tyrosine 32–cysteine 158 enclose the MARVEL domain. The next 4 membrane-spanning stretches (helical) occupy residues threonine 35 to valine 55, phenylalanine 69 to phenylalanine 89, leucine 102 to isoleucine 122, and leucine 132 to leucine 152.

Belongs to the chemokine-like factor family.

It localises to the membrane. This is CKLF-like MARVEL transmembrane domain-containing protein 7 (Cmtm7) from Mus musculus (Mouse).